A 209-amino-acid polypeptide reads, in one-letter code: Ribosomal RNA large subunit methyltransferase E (209 aa).

S-adenosyl-L-methionine-binding residues include glycine 63, tryptophan 65, aspartate 83, aspartate 99, and aspartate 124. Lysine 164 (proton acceptor) is an active-site residue.

It belongs to the class I-like SAM-binding methyltransferase superfamily. RNA methyltransferase RlmE family.

The protein resides in the cytoplasm. It carries out the reaction uridine(2552) in 23S rRNA + S-adenosyl-L-methionine = 2'-O-methyluridine(2552) in 23S rRNA + S-adenosyl-L-homocysteine + H(+). In terms of biological role, specifically methylates the uridine in position 2552 of 23S rRNA at the 2'-O position of the ribose in the fully assembled 50S ribosomal subunit. In Shewanella woodyi (strain ATCC 51908 / MS32), this protein is Ribosomal RNA large subunit methyltransferase E.